Reading from the N-terminus, the 264-residue chain is Putative hydro-lyase Bpet2233 (264 aa).

It belongs to the D-glutamate cyclase family.

The sequence is that of Putative hydro-lyase Bpet2233 from Bordetella petrii (strain ATCC BAA-461 / DSM 12804 / CCUG 43448).